The primary structure comprises 315 residues: Zinc finger transcription factor ref-2 (315 aa).

A C2H2-type 1; atypical zinc finger spans residues 83-112 (VQCLWETNGQVCMHVCQNSGELSTHISSNH). The C2H2-type 2; degenerate zinc-finger motif lies at 124-146 (KGCDREFKMFKAKYKLVNHMRVH). C2H2-type zinc fingers lie at residues 152–174 (FLCDVCNKVFARSENLKIHKRIH), 180–204 (FQCTHNGCTKLFANSSDRKKHMHVH), and 210–234 (YSCMYPDCGKTYTHPSSLRKHTKVH). The tract at residues 225-270 (SSLRKHTKVHENEKKSQLSPEHDESSDSGNASIGTPTTDESLTFSP) is disordered. The segment covering 233–249 (VHENEKKSQLSPEHDES) has biased composition (basic and acidic residues). Residues 251 to 270 (DSGNASIGTPTTDESLTFSP) are compositionally biased toward polar residues.

Interacts with TCF transcription factor pop-1; the interaction is direct and facilitates transcriptional activation; transcription may be repressed by beta-catenin/sys-1.

The protein localises to the nucleus. The protein resides in the cytoplasm. Its function is as follows. Transcription factor. Modulates expression of target genes by binding to regulatory elements. Required for normal cell division timing and cell positioning in anterior lineages, acting in a cell-autonomous manner. Required for development, fusion and fate of cells of the ventral epidermis, the Pn.p cells, during larval development; acts in concert with homeobox genes lin-39 and mab-5. Required for the specification of the AIY interneuron. In complex with TCF transcription factor pop-1, positively modulates expression of LIM/homeobox protein ttx-3 in anterior daughter cells of the SMDD/AIY neuron lineage. This Caenorhabditis elegans protein is Zinc finger transcription factor ref-2.